The primary structure comprises 555 residues: Energy-dependent translational throttle protein EttA (555 aa).

ABC transporter domains lie at 6–259 (YTMH…AQEA) and 324–550 (LEVS…RIKY). 39–46 (GLNGAGKS) contributes to the ATP binding site. The arm stretch occupies residues 95–139 (SEVVNALKRLDEVYALYADPDADFDKLAAEQGRLEEIIQAHDGHN). The ptIM stretch occupies residues 242-322 (GNYSSWLEQK…IPPGPRLGDK (81 aa)). Residue 356-363 (GPNGAGKS) participates in ATP binding.

This sequence belongs to the ABC transporter superfamily. ABCF family. Translational throttle EttA subfamily. As to quaternary structure, monomer. Probably contacts ribosomal proteins L1, L5, L33 and S7, the 16S and 23S rRNA and the P-site containing tRNA(fMet).

The protein localises to the cytoplasm. The enzyme catalyses ATP + H2O = ADP + phosphate + H(+). In terms of biological role, a translation factor that gates the progression of the 70S ribosomal initiation complex (IC, containing tRNA(fMet) in the P-site) into the translation elongation cycle by using a mechanism sensitive to the ATP/ADP ratio. Binds to the 70S ribosome E-site where it modulates the state of the translating ribosome during subunit translocation. ATP hydrolysis probably frees it from the ribosome, which can enter the elongation phase. In Escherichia coli O157:H7, this protein is Energy-dependent translational throttle protein EttA.